The following is a 480-amino-acid chain: Protein nucleotidyltransferase YdiU (480 aa).

8 residues coordinate ATP: G86, G88, R89, K109, D121, G122, R172, and R179. Catalysis depends on D248, which acts as the Proton acceptor. N249 and D258 together coordinate Mg(2+). Residue D258 participates in ATP binding.

It belongs to the SELO family. It depends on Mg(2+) as a cofactor. Requires Mn(2+) as cofactor.

The catalysed reaction is L-seryl-[protein] + ATP = 3-O-(5'-adenylyl)-L-seryl-[protein] + diphosphate. It carries out the reaction L-threonyl-[protein] + ATP = 3-O-(5'-adenylyl)-L-threonyl-[protein] + diphosphate. The enzyme catalyses L-tyrosyl-[protein] + ATP = O-(5'-adenylyl)-L-tyrosyl-[protein] + diphosphate. It catalyses the reaction L-histidyl-[protein] + UTP = N(tele)-(5'-uridylyl)-L-histidyl-[protein] + diphosphate. The catalysed reaction is L-seryl-[protein] + UTP = O-(5'-uridylyl)-L-seryl-[protein] + diphosphate. It carries out the reaction L-tyrosyl-[protein] + UTP = O-(5'-uridylyl)-L-tyrosyl-[protein] + diphosphate. In terms of biological role, nucleotidyltransferase involved in the post-translational modification of proteins. It can catalyze the addition of adenosine monophosphate (AMP) or uridine monophosphate (UMP) to a protein, resulting in modifications known as AMPylation and UMPylation. This chain is Protein nucleotidyltransferase YdiU, found in Salmonella agona (strain SL483).